Here is a 184-residue protein sequence, read N- to C-terminus: Photosystem I assembly protein Ycf4 (184 aa).

Transmembrane regions (helical) follow at residues 19 to 39 (ISNF…LLVG) and 57 to 77 (IVFF…LFIS).

This sequence belongs to the Ycf4 family.

The protein resides in the plastid. Its subcellular location is the chloroplast thylakoid membrane. In terms of biological role, seems to be required for the assembly of the photosystem I complex. This chain is Photosystem I assembly protein Ycf4, found in Nymphaea alba (White water-lily).